The chain runs to 603 residues: Polypeptide N-acetylgalactosaminyltransferase 10 (603 aa).

Residues 1-11 (MRRKEKRLLQA) lie on the Cytoplasmic side of the membrane. Residues 12-31 (VALVLAALVLLPNVGLWALY) traverse the membrane as a helical; Signal-anchor for type II membrane protein segment. Residues 32 to 603 (RERQPDGTPG…STVLEKFNRN (572 aa)) are Lumenal-facing. The tract at residues 38–59 (GTPGGSGAAVAPAAGQGSHSRQ) is disordered. Residues 45–55 (AAVAPAAGQGS) show a composition bias toward low complexity. Residues Asn124 and Asn146 are each glycosylated (N-linked (GlcNAc...) asparagine). 5 cysteine pairs are disulfide-bonded: Cys135–Cys365, Cys356–Cys432, Cys471–Cys488, Cys523–Cys538, and Cys563–Cys578. The interval 144–253 (LPNTSIIIPF…VNWLPPLLDR (110 aa)) is catalytic subdomain A. 4 residues coordinate substrate: His154, Glu156, Asp185, and Arg214. A Mn(2+)-binding site is contributed by Asp237. Ser238 serves as a coordination point for substrate. His239 is a Mn(2+) binding site. The catalytic subdomain B stretch occupies residues 311–373 (PFESPVMAGG…PCSRVGHIYR (63 aa)). Residue Trp342 coordinates substrate. Position 370 (His370) interacts with Mn(2+). Substrate is bound by residues Arg373 and Tyr378. The segment at 373–384 (RKYVPYKVPAGV) is flexible loop. A Ricin B-type lectin domain is found at 458–590 (AAWGEIRNVG…SSLTQQWLFE (133 aa)). An N-linked (GlcNAc...) asparagine glycan is attached at Asn593.

This sequence belongs to the glycosyltransferase 2 family. GalNAc-T subfamily. The cofactor is Mn(2+). Widely expressed. Expressed at high level in small intestine, and at intermediate levels in stomach, pancreas, ovary, thyroid gland and spleen. Weakly expressed in other tissues.

The protein localises to the golgi apparatus membrane. It catalyses the reaction L-seryl-[protein] + UDP-N-acetyl-alpha-D-galactosamine = a 3-O-[N-acetyl-alpha-D-galactosaminyl]-L-seryl-[protein] + UDP + H(+). The enzyme catalyses L-threonyl-[protein] + UDP-N-acetyl-alpha-D-galactosamine = a 3-O-[N-acetyl-alpha-D-galactosaminyl]-L-threonyl-[protein] + UDP + H(+). It participates in protein modification; protein glycosylation. Catalyzes the initial reaction in O-linked oligosaccharide biosynthesis, the transfer of an N-acetyl-D-galactosamine residue to a serine or threonine residue on the protein receptor. Has activity toward Muc5Ac and EA2 peptide substrates. In Homo sapiens (Human), this protein is Polypeptide N-acetylgalactosaminyltransferase 10 (GALNT10).